The primary structure comprises 397 residues: E3 ubiquitin-protein ligase RNF149 (397 aa).

The signal sequence occupies residues 1-20 (MLRWLCLYSALCALTHGSSA). Residues 39 to 49 (TNSSVTGSTES) are compositionally biased toward polar residues. The disordered stretch occupies residues 39-60 (TNSSVTGSTESGRYGDSSPKES). N40 and N140 each carry an N-linked (GlcNAc...) asparagine glycan. The PA domain occupies 83–170 (YIVPGTSAAA…PKGMEIMEPL (88 aa)). Residues 196 to 216 (VVFVAIAFITMMIISLAWLIF) form a helical membrane-spanning segment. N231 carries an N-linked (GlcNAc...) asparagine glycan. The RING-type; atypical zinc finger occupies 264–305 (CAVCIENYKTKDLVRILPCKHIFHRLCIDPWLIEHRTCPMCK). The disordered stretch occupies residues 341–397 (SITQEESRSEGNNLPSSSTGSSLQQSNSVKDDAGETTALLDDPGNDNAAATHTQDSH). The span at 351–368 (GNNLPSSSTGSSLQQSNS) shows a compositional bias: low complexity. Polar residues predominate over residues 388–397 (AAATHTQDSH).

It localises to the membrane. The catalysed reaction is S-ubiquitinyl-[E2 ubiquitin-conjugating enzyme]-L-cysteine + [acceptor protein]-L-lysine = [E2 ubiquitin-conjugating enzyme]-L-cysteine + N(6)-ubiquitinyl-[acceptor protein]-L-lysine.. It functions in the pathway protein modification; protein ubiquitination. Functionally, E3 ubiquitin-protein ligase. Ubiquitinates BRAF, inducing its proteasomal degradation. This is E3 ubiquitin-protein ligase RNF149 (rnf149) from Xenopus laevis (African clawed frog).